The chain runs to 199 residues: Hematopoietic prostaglandin D synthase (199 aa).

In terms of domain architecture, GST N-terminal spans 2 to 79 (PNYKLTYFNM…YLTKNTDLAG (78 aa)). Glutathione contacts are provided by residues tyrosine 8, arginine 14, tryptophan 39, 49 to 51 (GKI), and 63 to 64 (QS). The GST C-terminal domain maps to 81–199 (TEMEQCHVDA…WIKRRPQTKL (119 aa)).

The protein belongs to the GST superfamily. Sigma family. In terms of assembly, homodimer. Glutathione serves as cofactor. In terms of tissue distribution, expressed in a number of megakaryocytic cell lines but not in platelets. Highly expressed in adipose tissue, macrophages and placenta. Also expressed at lower levels in lung, heart, lymph nodes, appendix, bone marrow and fetal liver.

It is found in the cytoplasm. The enzyme catalyses prostaglandin H2 = prostaglandin D2. The catalysed reaction is RX + glutathione = an S-substituted glutathione + a halide anion + H(+). It catalyses the reaction 2-glyceryl-prostaglandin H2 = 2-glyceryl-prostaglandin D2. With respect to regulation, prostaglandin PGD2 synthesis is stimulated by calcium and magnesium ions. One calcium or magnesium ion is bound between the subunits of the homodimer. The interactions with the protein are for the most part mediated via water molecules. Magnesium increases the affinity for glutathione, while calcium has no effect on the affinity for glutathione. Functionally, bifunctional enzyme which catalyzes both the conversion of PGH2 to PGD2, a prostaglandin involved in smooth muscle contraction/relaxation and a potent inhibitor of platelet aggregation, and the conjugation of glutathione with a wide range of aryl halides and organic isothiocyanates. Also exhibits low glutathione-peroxidase activity towards cumene hydroperoxide. This chain is Hematopoietic prostaglandin D synthase, found in Homo sapiens (Human).